The chain runs to 102 residues: Large ribosomal subunit protein bL21 (102 aa).

Belongs to the bacterial ribosomal protein bL21 family. In terms of assembly, part of the 50S ribosomal subunit. Contacts protein L20.

This protein binds to 23S rRNA in the presence of protein L20. The protein is Large ribosomal subunit protein bL21 of Pseudarthrobacter chlorophenolicus (strain ATCC 700700 / DSM 12829 / CIP 107037 / JCM 12360 / KCTC 9906 / NCIMB 13794 / A6) (Arthrobacter chlorophenolicus).